The chain runs to 210 residues: FMN-dependent NADH:quinone oxidoreductase (210 aa).

Residues S10 and 16–18 (SRS) each bind FMN.

It belongs to the azoreductase type 1 family. As to quaternary structure, homodimer. It depends on FMN as a cofactor.

The enzyme catalyses 2 a quinone + NADH + H(+) = 2 a 1,4-benzosemiquinone + NAD(+). It carries out the reaction N,N-dimethyl-1,4-phenylenediamine + anthranilate + 2 NAD(+) = 2-(4-dimethylaminophenyl)diazenylbenzoate + 2 NADH + 2 H(+). In terms of biological role, quinone reductase that provides resistance to thiol-specific stress caused by electrophilic quinones. Also exhibits azoreductase activity. Catalyzes the reductive cleavage of the azo bond in aromatic azo compounds to the corresponding amines. This chain is FMN-dependent NADH:quinone oxidoreductase, found in Kineococcus radiotolerans (strain ATCC BAA-149 / DSM 14245 / SRS30216).